Here is a 94-residue protein sequence, read N- to C-terminus: Co-chaperonin GroES (94 aa).

Belongs to the GroES chaperonin family. As to quaternary structure, heptamer of 7 subunits arranged in a ring. Interacts with the chaperonin GroEL.

Its subcellular location is the cytoplasm. Together with the chaperonin GroEL, plays an essential role in assisting protein folding. The GroEL-GroES system forms a nano-cage that allows encapsulation of the non-native substrate proteins and provides a physical environment optimized to promote and accelerate protein folding. GroES binds to the apical surface of the GroEL ring, thereby capping the opening of the GroEL channel. The sequence is that of Co-chaperonin GroES from Clostridioides difficile (strain 630) (Peptoclostridium difficile).